The primary structure comprises 422 residues: MVTIVLGAQFGDEGKGKITDLLSQSATLCCRAAGGHNAGHTIVHDNITYDFHILPSGLISPDCVNLIGSGTVVHVPSFFKELDALKAKGLKEADKRIFISDRAHVCFDLHSVVDGLEEADLAGKKVGTTGKGIGPCYSDKASRRGVRIGEVLEEGVAEDKLRSLEAGYRRRFGELQYDLEDEVKRFNEYRTKLQPYVVDQMAFLEKYRSCPSVLVEGANALMLDIDHGTYPYVTSSCTGLGGAIQGLTLNPTSIKSIVGVVKAYTTRVGSGPFPTEQINDIGEKLQSVGREFGVTTGRRRRCGWLDMVMCRYSNAINHYTTINLTKLDILDDFDEIKVAVAYKLDGRRLESFPAQLEVLDKVEVEYVTFPGWKSNTMGVTRWEDLPVNARRYVQFIEQEMGGVPIKWIGTGPARTHMIEREV.

GTP is bound by residues 11–17 (GDEGKGK) and 39–41 (GHT). Aspartate 12 functions as the Proton acceptor in the catalytic mechanism. Aspartate 12 and glycine 39 together coordinate Mg(2+). IMP-binding positions include 12-15 (DEGK), 37-40 (NAGH), threonine 129, arginine 143, asparagine 219, threonine 234, and arginine 298. Histidine 40 serves as the catalytic Proton donor. Residue 294–300 (VTTGRRR) coordinates substrate. GTP contacts are provided by residues arginine 300, 326–328 (KLD), and 409–411 (GTG).

The protein belongs to the adenylosuccinate synthetase family. Homodimer. Mg(2+) is required as a cofactor.

Its subcellular location is the cytoplasm. The enzyme catalyses IMP + L-aspartate + GTP = N(6)-(1,2-dicarboxyethyl)-AMP + GDP + phosphate + 2 H(+). It participates in purine metabolism; AMP biosynthesis via de novo pathway; AMP from IMP: step 1/2. Functionally, plays an important role in the de novo pathway and in the salvage pathway of purine nucleotide biosynthesis. Catalyzes the first committed step in the biosynthesis of AMP from IMP. The chain is Adenylosuccinate synthetase from Blastomyces gilchristii (strain SLH14081) (Blastomyces dermatitidis).